We begin with the raw amino-acid sequence, 162 residues long: Ribosomal RNA large subunit methyltransferase H (162 aa).

The S-adenosyl-L-methionine site is built by Leu-78 and Gly-110.

It belongs to the RNA methyltransferase RlmH family. Homodimer.

The protein localises to the cytoplasm. It catalyses the reaction pseudouridine(1915) in 23S rRNA + S-adenosyl-L-methionine = N(3)-methylpseudouridine(1915) in 23S rRNA + S-adenosyl-L-homocysteine + H(+). Functionally, specifically methylates the pseudouridine at position 1915 (m3Psi1915) in 23S rRNA. The polypeptide is Ribosomal RNA large subunit methyltransferase H (Bradyrhizobium sp. (strain ORS 278)).